The sequence spans 322 residues: Tubulin alpha-4 chain (322 aa).

The GTP site is built by serine 15, glycine 19, threonine 20, threonine 54, asparagine 81, and asparagine 103. Glutamate 129 is a catalytic residue.

The protein belongs to the tubulin family. As to quaternary structure, dimer of alpha and beta chains. A typical microtubule is a hollow water-filled tube with an outer diameter of 25 nm and an inner diameter of 15 nM. Alpha-beta heterodimers associate head-to-tail to form protofilaments running lengthwise along the microtubule wall with the beta-tubulin subunit facing the microtubule plus end conferring a structural polarity. Microtubules usually have 13 protofilaments but different protofilament numbers can be found in some organisms and specialized cells. It depends on Mg(2+) as a cofactor. Post-translationally, some glutamate residues at the C-terminus are polyglycylated, resulting in polyglycine chains on the gamma-carboxyl group. Glycylation is mainly limited to tubulin incorporated into axonemes (cilia and flagella) whereas glutamylation is prevalent in neuronal cells, centrioles, axonemes, and the mitotic spindle. Both modifications can coexist on the same protein on adjacent residues, and lowering polyglycylation levels increases polyglutamylation, and reciprocally. The precise function of polyglycylation is still unclear. Some glutamate residues at the C-terminus are polyglutamylated, resulting in polyglutamate chains on the gamma-carboxyl group. Polyglutamylation plays a key role in microtubule severing by spastin (SPAST). SPAST preferentially recognizes and acts on microtubules decorated with short polyglutamate tails: severing activity by SPAST increases as the number of glutamates per tubulin rises from one to eight, but decreases beyond this glutamylation threshold.

Its subcellular location is the cytoplasm. It localises to the cytoskeleton. It carries out the reaction GTP + H2O = GDP + phosphate + H(+). In terms of biological role, tubulin is the major constituent of microtubules, a cylinder consisting of laterally associated linear protofilaments composed of alpha- and beta-tubulin heterodimers. Microtubules grow by the addition of GTP-tubulin dimers to the microtubule end, where a stabilizing cap forms. Below the cap, tubulin dimers are in GDP-bound state, owing to GTPase activity of alpha-tubulin. The polypeptide is Tubulin alpha-4 chain (Gallus gallus (Chicken)).